The primary structure comprises 383 residues: ATP phosphoribosyltransferase regulatory subunit (383 aa).

The protein belongs to the class-II aminoacyl-tRNA synthetase family. HisZ subfamily. Heteromultimer composed of HisG and HisZ subunits.

It localises to the cytoplasm. It functions in the pathway amino-acid biosynthesis; L-histidine biosynthesis; L-histidine from 5-phospho-alpha-D-ribose 1-diphosphate: step 1/9. Required for the first step of histidine biosynthesis. May allow the feedback regulation of ATP phosphoribosyltransferase activity by histidine. This Paraburkholderia phytofirmans (strain DSM 17436 / LMG 22146 / PsJN) (Burkholderia phytofirmans) protein is ATP phosphoribosyltransferase regulatory subunit.